The chain runs to 189 residues: Cancer/testis antigen family 45 member A10 (189 aa).

It belongs to the CT45 family.

It localises to the nucleus. The sequence is that of Cancer/testis antigen family 45 member A10 from Homo sapiens (Human).